The sequence spans 88 residues: MGLLGYFRSDIPKKSSAKLAKDRLQIIVAHEHSNAVCPAYLPEMQNEIIEVIRKFMKISNDDVKCEFSDNAEDDMSVLEVNITLPKNR.

Belongs to the MinE family.

Functionally, prevents the cell division inhibition by proteins MinC and MinD at internal division sites while permitting inhibition at polar sites. This ensures cell division at the proper site by restricting the formation of a division septum at the midpoint of the long axis of the cell. The chain is Cell division topological specificity factor from Psychromonas ingrahamii (strain DSM 17664 / CCUG 51855 / 37).